A 191-amino-acid chain; its full sequence is Putative 3-methyladenine DNA glycosylase (191 aa).

The protein belongs to the DNA glycosylase MPG family.

This chain is Putative 3-methyladenine DNA glycosylase, found in Cutibacterium acnes (strain DSM 16379 / KPA171202) (Propionibacterium acnes).